A 131-amino-acid chain; its full sequence is Fumarate reductase subunit C (131 aa).

A run of 3 helical transmembrane segments spans residues 30–50 (EGTAVPTVWFSIVLIYGLFAL), 61–81 (IGFLQNPVVVILNLITLAAAL), and 110–130 (IKGLWVVTAVVTVVILFVALF).

It belongs to the FrdC family. As to quaternary structure, part of an enzyme complex containing four subunits: a flavoprotein (FrdA), an iron-sulfur protein (FrdB), and two hydrophobic anchor proteins (FrdC and FrdD).

It is found in the cell inner membrane. In terms of biological role, two distinct, membrane-bound, FAD-containing enzymes are responsible for the catalysis of fumarate and succinate interconversion; fumarate reductase is used in anaerobic growth, and succinate dehydrogenase is used in aerobic growth. Anchors the catalytic components of the fumarate reductase complex to the cell inner membrane, binds quinones. The sequence is that of Fumarate reductase subunit C from Klebsiella pneumoniae (strain 342).